Here is a 437-residue protein sequence, read N- to C-terminus: Ribosomal protein uS12 methylthiotransferase RimO (437 aa).

The MTTase N-terminal domain maps to 5–116 (PTIAISHLGC…IVEIVERVET (112 aa)). Residues C14, C50, C79, C154, C158, and C161 each coordinate [4Fe-4S] cluster. Residues 140–369 (TTSEGVAYLR…MLTQQPISER (230 aa)) form the Radical SAM core domain. In terms of domain architecture, TRAM spans 372–437 (QAYIGQTVDV…DTYDLYGEIV (66 aa)).

This sequence belongs to the methylthiotransferase family. RimO subfamily. [4Fe-4S] cluster serves as cofactor.

It is found in the cytoplasm. The catalysed reaction is L-aspartate(89)-[ribosomal protein uS12]-hydrogen + (sulfur carrier)-SH + AH2 + 2 S-adenosyl-L-methionine = 3-methylsulfanyl-L-aspartate(89)-[ribosomal protein uS12]-hydrogen + (sulfur carrier)-H + 5'-deoxyadenosine + L-methionine + A + S-adenosyl-L-homocysteine + 2 H(+). In terms of biological role, catalyzes the methylthiolation of an aspartic acid residue of ribosomal protein uS12. The protein is Ribosomal protein uS12 methylthiotransferase RimO of Microcystis aeruginosa (strain NIES-843 / IAM M-2473).